Consider the following 131-residue polypeptide: Neo-calmodulin (131 aa).

EF-hand domains are found at residues 1-32 (EFKE…LGQN), 33-68 (PTEA…KMKD), 70-105 (DSEE…LGEK), and 106-131 (LTDE…YEEF). Ca(2+) contacts are provided by Asp-10, Asp-12, Asp-14, Thr-16, Glu-21, Asp-46, Asp-48, Asn-50, Thr-52, Glu-57, Asp-83, Asp-85, Asn-87, Tyr-89, Glu-94, Asp-119, Asp-121, Asp-123, Gln-125, and Glu-130.

The protein belongs to the calmodulin family.

The chain is Neo-calmodulin from Gallus gallus (Chicken).